The primary structure comprises 349 residues: Bifunctional nitrilase/nitrile hydratase NIT4A (349 aa).

Positions Val29 to Leu301 constitute a CN hydrolase domain. Glu69 serves as the catalytic Proton acceptor. Lys156 is an active-site residue. Cys190 serves as the catalytic Nucleophile.

The protein belongs to the carbon-nitrogen hydrolase superfamily. Nitrilase family. As to expression, ubiquitous.

The enzyme catalyses L-asparagine = 3-cyano-L-alanine + H2O. The catalysed reaction is 3-cyano-L-alanine + 2 H2O = L-aspartate + NH4(+). Its function is as follows. Involved in the cyanide detoxification pathway. Has nitrilase and nitrile-hydratase activity in the ratio 4.0:1, producing both asparagine and aspartic acid from beta-cyano-L-alanine (Ala(CN)). Can also use 3-phenylpropionitrile as substrate, but not indole-3-acetonitrile. The sequence is that of Bifunctional nitrilase/nitrile hydratase NIT4A (NIT4A) from Lupinus angustifolius (Narrow-leaved blue lupine).